Reading from the N-terminus, the 447-residue chain is uncharacterized protein (447 aa).

Residues 392–435 (RFTKPSSSVAKSTSPSLRNSGSDESDLNQSDSDKEDERVVPVPK) are disordered. The segment covering 395–407 (KPSSSVAKSTSPS) has biased composition (low complexity). A compositionally biased stretch (polar residues) spans 408-421 (LRNSGSDESDLNQS).

This is an uncharacterized protein from Invertebrate iridescent virus 3 (IIV-3).